The chain runs to 257 residues: Methylthioribulose-1-phosphate dehydratase (257 aa).

The disordered stretch occupies residues 1–33; the sequence is MVSSQEKMASISDIIQKDEDSGSEKTESQDKEH. Residues 15-33 show a composition bias toward basic and acidic residues; it reads IQKDEDSGSEKTESQDKEH. Cys-107 contributes to the substrate binding site. His-125 and His-127 together coordinate Zn(2+). Glu-149 functions as the Proton donor/acceptor in the catalytic mechanism. A Zn(2+)-binding site is contributed by His-205.

It belongs to the aldolase class II family. MtnB subfamily. The cofactor is Zn(2+).

The protein resides in the cytoplasm. It carries out the reaction 5-(methylsulfanyl)-D-ribulose 1-phosphate = 5-methylsulfanyl-2,3-dioxopentyl phosphate + H2O. It functions in the pathway amino-acid biosynthesis; L-methionine biosynthesis via salvage pathway; L-methionine from S-methyl-5-thio-alpha-D-ribose 1-phosphate: step 2/6. Functionally, catalyzes the dehydration of methylthioribulose-1-phosphate (MTRu-1-P) into 2,3-diketo-5-methylthiopentyl-1-phosphate (DK-MTP-1-P). Functions in the methionine salvage pathway. May play a role in apoptosis. In Esox lucius (Northern pike), this protein is Methylthioribulose-1-phosphate dehydratase.